The primary structure comprises 197 residues: MEGAELIIQEIHREAEQKIQYILSEAQREAEKLKEEARKRAQSQAEWILRKAKTQAEIEKQRIIANAKLEVRRKKLAVQEELIGEVLSAMREKLAALPDDEYFEALVSLTKEAIEELGTKKIVLRSNERTLKLIDSRMEEFSEKVGVEVSLGEPIECIGGVLVESPDGTVRVDNTFDARIERLESELRATVAKALFG.

The protein belongs to the V-ATPase E subunit family. As to quaternary structure, has multiple subunits with at least A(3), B(3), C, D, E, F, H, I and proteolipid K(x).

The protein localises to the cell membrane. Its function is as follows. Component of the A-type ATP synthase that produces ATP from ADP in the presence of a proton gradient across the membrane. This chain is A-type ATP synthase subunit E, found in Thermococcus gammatolerans (strain DSM 15229 / JCM 11827 / EJ3).